The sequence spans 238 residues: Aspartate/glutamate leucyltransferase (238 aa).

It belongs to the R-transferase family. Bpt subfamily.

The protein localises to the cytoplasm. The catalysed reaction is N-terminal L-glutamyl-[protein] + L-leucyl-tRNA(Leu) = N-terminal L-leucyl-L-glutamyl-[protein] + tRNA(Leu) + H(+). It carries out the reaction N-terminal L-aspartyl-[protein] + L-leucyl-tRNA(Leu) = N-terminal L-leucyl-L-aspartyl-[protein] + tRNA(Leu) + H(+). Its function is as follows. Functions in the N-end rule pathway of protein degradation where it conjugates Leu from its aminoacyl-tRNA to the N-termini of proteins containing an N-terminal aspartate or glutamate. In Shewanella sp. (strain MR-4), this protein is Aspartate/glutamate leucyltransferase.